The following is a 246-amino-acid chain: tRNA pseudouridine synthase A (246 aa).

Asp-52 serves as the catalytic Nucleophile. Residue Tyr-110 participates in substrate binding.

This sequence belongs to the tRNA pseudouridine synthase TruA family. In terms of assembly, homodimer.

It carries out the reaction uridine(38/39/40) in tRNA = pseudouridine(38/39/40) in tRNA. Formation of pseudouridine at positions 38, 39 and 40 in the anticodon stem and loop of transfer RNAs. The polypeptide is tRNA pseudouridine synthase A (Exiguobacterium sp. (strain ATCC BAA-1283 / AT1b)).